The following is a 348-amino-acid chain: Dihydroorotase (348 aa).

The Zn(2+) site is built by His-17 and His-19. Substrate is bound by residues 19–21 (HLR) and Asn-45. Residues Lys-103, His-140, and His-178 each contribute to the Zn(2+) site. Lys-103 is subject to N6-carboxylysine. His-140 lines the substrate pocket. Position 223 (Leu-223) interacts with substrate. Residue Asp-251 participates in Zn(2+) binding. Asp-251 is an active-site residue. Residues His-255 and Ala-267 each coordinate substrate.

It belongs to the metallo-dependent hydrolases superfamily. DHOase family. Class II DHOase subfamily. In terms of assembly, homodimer. Zn(2+) serves as cofactor.

It carries out the reaction (S)-dihydroorotate + H2O = N-carbamoyl-L-aspartate + H(+). It participates in pyrimidine metabolism; UMP biosynthesis via de novo pathway; (S)-dihydroorotate from bicarbonate: step 3/3. Catalyzes the reversible cyclization of carbamoyl aspartate to dihydroorotate. This is Dihydroorotase from Escherichia fergusonii (strain ATCC 35469 / DSM 13698 / CCUG 18766 / IAM 14443 / JCM 21226 / LMG 7866 / NBRC 102419 / NCTC 12128 / CDC 0568-73).